The following is an 81-amino-acid chain: Large ribosomal subunit protein uL24 (81 aa).

It belongs to the universal ribosomal protein uL24 family. As to quaternary structure, part of the 50S ribosomal subunit.

One of two assembly initiator proteins, it binds directly to the 5'-end of the 23S rRNA, where it nucleates assembly of the 50S subunit. Its function is as follows. One of the proteins that surrounds the polypeptide exit tunnel on the outside of the subunit. This Chloroherpeton thalassium (strain ATCC 35110 / GB-78) protein is Large ribosomal subunit protein uL24.